The primary structure comprises 323 residues: MSGKPPAIFLMGPTAAGKTDLAIELTTVLPCELISVDSALVYRGMDIGSAKPSKEVLAAHPHRLIDILDPAQSYSAAQFRADALEAMAEITARGKIPLLVGGTMLYYKALIDGLADMPAADATVRAELEAQAEALGLAELHRQLAEVDPESAARIHPNDPQRLIRALEVYRVSGESMTAHRRRQFAESRGADAGAGGHLPYTVASLAIAPTDRHILHQRIALRFSQMLEQGFVDEVRSLRARSDLHAGLPSIRAVGYRQVWDYLDGKLTENEMRERGIIATRQLAKRQFTWLRGWPEVHWLDSLACDNLSRTLKYLGAISILS.

12–19 (GPTAAGKT) is an ATP binding site. Residue 14-19 (TAAGKT) participates in substrate binding. Interaction with substrate tRNA regions lie at residues 37 to 40 (DSAL) and 161 to 165 (QRLIR).

Belongs to the IPP transferase family. In terms of assembly, monomer. The cofactor is Mg(2+).

The enzyme catalyses adenosine(37) in tRNA + dimethylallyl diphosphate = N(6)-dimethylallyladenosine(37) in tRNA + diphosphate. Its function is as follows. Catalyzes the transfer of a dimethylallyl group onto the adenine at position 37 in tRNAs that read codons beginning with uridine, leading to the formation of N6-(dimethylallyl)adenosine (i(6)A). The protein is tRNA dimethylallyltransferase of Pseudomonas putida (strain ATCC 47054 / DSM 6125 / CFBP 8728 / NCIMB 11950 / KT2440).